Here is a 223-residue protein sequence, read N- to C-terminus: Endo-1,4-beta-xylanase 2 (223 aa).

The signal sequence occupies residues 1-19 (MVSFTSLLAGVAAISGVLA). Residues 20-33 (APAAEVESVAVEKR) constitute a propeptide that is removed on maturation. Glutamine 34 is modified (pyrrolidone carboxylic acid). The 189-residue stretch at 34-222 (QTIQPGTGYN…FSSGSASITV (189 aa)) folds into the GH11 domain. N-linked (GlcNAc...) asparagine glycosylation is found at asparagine 71 and asparagine 94. Tyrosine 106 and tyrosine 110 together coordinate substrate. The active-site Nucleophile is the glutamate 119. Positions 121, 155, 159, 169, and 204 each coordinate substrate. Residue glutamate 210 is the Proton donor of the active site.

The protein belongs to the glycosyl hydrolase 11 (cellulase G) family.

It is found in the secreted. It catalyses the reaction Endohydrolysis of (1-&gt;4)-beta-D-xylosidic linkages in xylans.. It functions in the pathway glycan degradation; xylan degradation. In terms of biological role, glycoside hydrolase involved in the hydrolysis of xylan, a major plant cell wall hemicellulose made up of 1,4-beta-linked D-xylopyranose residues. Catalyzes the endohydrolysis of the main-chain 1,4-beta-glycosidic bonds connecting the xylose subunits yielding various xylooligosaccharides and xylose. The catalysis proceeds by a double-displacement reaction mechanism with a putative covalent glycosyl-enzyme intermediate, with retention of the anomeric configuration. Produces xylobiose and xylose as the main degradation products. This chain is Endo-1,4-beta-xylanase 2, found in Hypocrea jecorina (strain ATCC 56765 / BCRC 32924 / NRRL 11460 / Rut C-30) (Trichoderma reesei).